Here is an 84-residue protein sequence, read N- to C-terminus: Large ribosomal subunit protein eL34 (84 aa).

Belongs to the eukaryotic ribosomal protein eL34 family.

This chain is Large ribosomal subunit protein eL34 (ribL34e), found in Pyrobaculum aerophilum (strain ATCC 51768 / DSM 7523 / JCM 9630 / CIP 104966 / NBRC 100827 / IM2).